A 170-amino-acid chain; its full sequence is ATP synthase subunit b (170 aa).

A helical membrane pass occupies residues 11–31 (GLNTGDIIFQLIAMLILLALL).

Belongs to the ATPase B chain family. In terms of assembly, F-type ATPases have 2 components, F(1) - the catalytic core - and F(0) - the membrane proton channel. F(1) has five subunits: alpha(3), beta(3), gamma(1), delta(1), epsilon(1). F(0) has three main subunits: a(1), b(2) and c(10-14). The alpha and beta chains form an alternating ring which encloses part of the gamma chain. F(1) is attached to F(0) by a central stalk formed by the gamma and epsilon chains, while a peripheral stalk is formed by the delta and b chains.

The protein localises to the cell membrane. F(1)F(0) ATP synthase produces ATP from ADP in the presence of a proton or sodium gradient. F-type ATPases consist of two structural domains, F(1) containing the extramembraneous catalytic core and F(0) containing the membrane proton channel, linked together by a central stalk and a peripheral stalk. During catalysis, ATP synthesis in the catalytic domain of F(1) is coupled via a rotary mechanism of the central stalk subunits to proton translocation. Its function is as follows. Component of the F(0) channel, it forms part of the peripheral stalk, linking F(1) to F(0). This is ATP synthase subunit b from Bacillus pumilus (strain SAFR-032).